The chain runs to 239 residues: 7-cyano-7-deazaguanine synthase (239 aa).

7–17 provides a ligand contact to ATP; it reads LSGGIDSSTLL. Cys184, Cys192, Cys195, and Cys198 together coordinate Zn(2+).

This sequence belongs to the QueC family. The cofactor is Zn(2+).

It carries out the reaction 7-carboxy-7-deazaguanine + NH4(+) + ATP = 7-cyano-7-deazaguanine + ADP + phosphate + H2O + H(+). The protein operates within purine metabolism; 7-cyano-7-deazaguanine biosynthesis. Catalyzes the ATP-dependent conversion of 7-carboxy-7-deazaguanine (CDG) to 7-cyano-7-deazaguanine (preQ(0)). The sequence is that of 7-cyano-7-deazaguanine synthase from Archaeoglobus fulgidus (strain ATCC 49558 / DSM 4304 / JCM 9628 / NBRC 100126 / VC-16).